Consider the following 446-residue polypeptide: Low-affinity gluconate transporter (446 aa).

A topological domain (cytoplasmic) is located at residue Met1. A helical membrane pass occupies residues 2-22 (TTLTLVLTAVGSVLLLLFLVM). Residues 23–26 (KARM) are Periplasmic-facing. A helical transmembrane segment spans residues 27–47 (HAFLALMVVSMGAGLFSGMPL). Topologically, residues 48 to 58 (DKIAATMEKGM) are cytoplasmic. The helical transmembrane segment at 59–79 (GGTLGFLAVVVALGAMFGKIL) threads the bilayer. The Periplasmic portion of the chain corresponds to 80 to 109 (HETGAVDQIAVKMLKSFGHSRAHYAIGLAG). Residues 110–130 (LVCALPLFFEVAIVLLISVAF) form a helical membrane-spanning segment. Residues 131-142 (SMARHTGTNLVK) lie on the Cytoplasmic side of the membrane. Residues 143–163 (LVIPLFAGVAAAAAFLVPGPA) traverse the membrane as a helical segment. Over 164–176 (PMLLASQMNADFG) the chain is Periplasmic. A helical transmembrane segment spans residues 177 to 197 (WMILIGLCAAIPGMIIAGPLW). The Cytoplasmic portion of the chain corresponds to 198-225 (GNFISRYVELHIPDDISEPHLGEGKMPS). A helical transmembrane segment spans residues 226–246 (FGFSLSLILLPLVLVGLKTIA). The Periplasmic segment spans residues 247 to 261 (ARFVPEGSTAYEWFE). Residues 262-282 (FIGHPFTAILVACLVAIYGLA) traverse the membrane as a helical segment. Residues 283-294 (MRQGMPKDKVME) lie on the Cytoplasmic side of the membrane. Residues 295–315 (ICGHALQPAGIILLVIGAGGV) form a helical membrane-spanning segment. The Periplasmic segment spans residues 316–330 (FKQVLVDSGVGPALG). The helical transmembrane segment at 331–351 (EALTGMGLPIAITCFVLAAAV) threads the bilayer. A topological domain (cytoplasmic) is located at residue Arg352. A helical membrane pass occupies residues 353–373 (IIQGSATVACLTAVGLVMPVI). The Periplasmic segment spans residues 374–387 (EQLNYSGAQMAALS). A helical transmembrane segment spans residues 388–408 (ICIAGGSIVVSHVNDAGFWLF). Topologically, residues 409 to 424 (GKFTGATEAETLKTWT) are cytoplasmic. Residues 425-445 (MMETILGTVGAIVGMIAFQLL) traverse the membrane as a helical segment. A topological domain (periplasmic) is located at residue Ser446.

The protein belongs to the GntP permease family.

It localises to the cell inner membrane. Part of the gluconate utilization system Gnt-I; low-affinity intake of gluconate. This is Low-affinity gluconate transporter (gntU) from Escherichia coli O157:H7.